The chain runs to 390 residues: Formamidopyrimidine-DNA glycosylase (390 aa).

Pro-2 acts as the Schiff-base intermediate with DNA in catalysis. Glu-3 serves as the catalytic Proton donor. The active-site Proton donor; for beta-elimination activity is the Lys-60. 4 residues coordinate DNA: Tyr-107, Arg-126, Lys-167, and Asn-186. Positions 283–390 are disordered; that stretch reads AEKAAKVRPA…AGKKPKGRKS (108 aa). Residues 301–316 are compositionally biased toward acidic residues; the sequence is DDGDGEEDEQETEKED. The segment covering 321–337 has biased composition (basic residues); the sequence is SKKGQKPRGGRGKKPAS. A compositionally biased stretch (acidic residues) spans 343–355; sequence ESDDDGDDSEAEE. The span at 360 to 370 shows a compositional bias: basic residues; it reads PKGRGTKPAIK.

This sequence belongs to the FPG family. In terms of assembly, monomer. In terms of tissue distribution, expressed in leaves (at protein levels).

The protein resides in the nucleus. It carries out the reaction Hydrolysis of DNA containing ring-opened 7-methylguanine residues, releasing 2,6-diamino-4-hydroxy-5-(N-methyl)formamidopyrimidine.. The catalysed reaction is 2'-deoxyribonucleotide-(2'-deoxyribose 5'-phosphate)-2'-deoxyribonucleotide-DNA = a 3'-end 2'-deoxyribonucleotide-(2,3-dehydro-2,3-deoxyribose 5'-phosphate)-DNA + a 5'-end 5'-phospho-2'-deoxyribonucleoside-DNA + H(+). Its function is as follows. Involved in base excision repair of DNA damaged by oxidation or by mutagenic agents. Acts as a DNA glycosylase that recognizes and removes damaged bases. Can process efficiently 4,6-diamino-5-formamidopyrimidine (FapyA), 2,6-diamino-4- hydroxy-5-formamidopyrimidine (FapyG) and the further oxidation products of 8-oxoguanine (8-oxoG), such as guanidinohydantoin and spiroiminodihydantoin. Has marginal activity towards 8-oxoG. Has AP (apurinic/apyrimidinic) lyase activity. Cleaves the DNA backbone by beta-delta elimination to generate a single-strand break at the site of the removed base with both 3'- and 5'-phosphates. The sequence is that of Formamidopyrimidine-DNA glycosylase (FPG1) from Arabidopsis thaliana (Mouse-ear cress).